Reading from the N-terminus, the 196-residue chain is Large ribosomal subunit protein mL66 (196 aa).

The N-terminal 34 residues, methionine 1 to glycine 34, are a transit peptide targeting the mitochondrion.

Belongs to the bacterial ribosomal protein bS18 family. Mitochondrion-specific ribosomal protein mL66 subfamily. In terms of assembly, component of the mitochondrial large ribosomal subunit (mt-LSU). Mature mammalian 55S mitochondrial ribosomes consist of a small (28S) and a large (39S) subunit. The 28S small subunit contains a 12S ribosomal RNA (12S mt-rRNA) and 30 different proteins. The 39S large subunit contains a 16S rRNA (16S mt-rRNA), a copy of mitochondrial valine transfer RNA (mt-tRNA(Val)), which plays an integral structural role, and 52 different proteins. mL66 forms a zinc-binding site with uL10m.

It localises to the mitochondrion. The sequence is that of Large ribosomal subunit protein mL66 (MRPS18A) from Homo sapiens (Human).